The following is a 339-amino-acid chain: 1-aminocyclopropane-1-carboxylate deaminase (339 aa).

At Lys-52 the chain carries N6-(pyridoxal phosphate)lysine. Ser-79 functions as the Nucleophile in the catalytic mechanism.

This sequence belongs to the ACC deaminase/D-cysteine desulfhydrase family. In terms of assembly, homotrimer. The cofactor is pyridoxal 5'-phosphate.

The catalysed reaction is 1-aminocyclopropane-1-carboxylate + H2O = 2-oxobutanoate + NH4(+). Its function is as follows. Catalyzes a cyclopropane ring-opening reaction, the irreversible conversion of 1-aminocyclopropane-1-carboxylate (ACC) to ammonia and alpha-ketobutyrate. Allows growth on ACC as a nitrogen source. The chain is 1-aminocyclopropane-1-carboxylate deaminase from Bradyrhizobium sp. (strain ORS 278).